A 606-amino-acid chain; its full sequence is MRSNGCGELRSKHIASNVKLCGWVDRCRDHGGVIFIDLRDRSGTIQITVDPDQGTELFASAESLRNETVLQITGLVRPRPADAINSKLSTGEIEVLANGLEVLNPVTGNLPFTVSIHDEEPVKEELRLRHRHLDLRRERMSRNLQLRHTTIKTARHFLEDEGFIEVETPVLTRSTPEGARDYLVPSRVCSGEWFALPQSPQLFKQLLMVGGLERYYQVARCFRDEDLRADRQPEFTQLDIEMSFMDQEQILKLNERLIAAIWKAVKGIDLPLPFPRLTWHEAMDRYGTDRPDTRYGMELNDVSDILKDMGFKVFSGAIAAGGSVKCITVPNGNDLISNVRIKPGGDIFNEAQKAGAGGLAFIRVRDSDEIDSIGAIKDNLNSKQKAALLKQTGAKAGDLILFGAGKTATVNSALDRVRQFLGRELGLIPTDQDNKLWQFLWVVDFPMFELNAEENRLEALHHPFCAPNKDDLGDDPDAWMERLPQARAQAYDLVLNGLELGGGSLRIHNAELQRQVLQTIGLPLEEAKQQFGFLIDALEMGAPPHGGLAFGMDRIVMLLTGEDSIRDTIAFPKTQQARCLMTQAPAGVSNHQLEELHVESTWVDPE.

Glu-177 serves as a coordination point for L-aspartate. The aspartate stretch occupies residues 201–204; sequence QLFK. Position 223 (Arg-223) interacts with L-aspartate. ATP is bound by residues 223–225 and Gln-232; that span reads RDE. Position 461 (His-461) interacts with L-aspartate. Glu-499 provides a ligand contact to ATP. Arg-506 serves as a coordination point for L-aspartate. 551–554 is a binding site for ATP; it reads GMDR.

Belongs to the class-II aminoacyl-tRNA synthetase family. Type 1 subfamily. In terms of assembly, homodimer.

It is found in the cytoplasm. It catalyses the reaction tRNA(Asx) + L-aspartate + ATP = L-aspartyl-tRNA(Asx) + AMP + diphosphate. Its function is as follows. Aspartyl-tRNA synthetase with relaxed tRNA specificity since it is able to aspartylate not only its cognate tRNA(Asp) but also tRNA(Asn). Reaction proceeds in two steps: L-aspartate is first activated by ATP to form Asp-AMP and then transferred to the acceptor end of tRNA(Asp/Asn). The chain is Aspartate--tRNA(Asp/Asn) ligase from Prochlorococcus marinus (strain MIT 9313).